Here is a 119-residue protein sequence, read N- to C-terminus: Large ribosomal subunit protein eL31 (119 aa).

This sequence belongs to the eukaryotic ribosomal protein eL31 family.

This chain is Large ribosomal subunit protein eL31 (RPL31), found in Cyanophora paradoxa.